A 239-amino-acid chain; its full sequence is Pyridoxine 5'-phosphate synthase (239 aa).

Asn7 is a binding site for 3-amino-2-oxopropyl phosphate. Residue 9–10 (DH) coordinates 1-deoxy-D-xylulose 5-phosphate. Residue Arg18 coordinates 3-amino-2-oxopropyl phosphate. The Proton acceptor role is filled by His43. 1-deoxy-D-xylulose 5-phosphate-binding residues include Arg45 and His50. The Proton acceptor role is filled by Glu70. Thr100 contributes to the 1-deoxy-D-xylulose 5-phosphate binding site. His191 (proton donor) is an active-site residue. Residues Gly192 and 213 to 214 (GH) each bind 3-amino-2-oxopropyl phosphate.

Belongs to the PNP synthase family. Homooctamer; tetramer of dimers.

Its subcellular location is the cytoplasm. It carries out the reaction 3-amino-2-oxopropyl phosphate + 1-deoxy-D-xylulose 5-phosphate = pyridoxine 5'-phosphate + phosphate + 2 H2O + H(+). It functions in the pathway cofactor biosynthesis; pyridoxine 5'-phosphate biosynthesis; pyridoxine 5'-phosphate from D-erythrose 4-phosphate: step 5/5. Its function is as follows. Catalyzes the complicated ring closure reaction between the two acyclic compounds 1-deoxy-D-xylulose-5-phosphate (DXP) and 3-amino-2-oxopropyl phosphate (1-amino-acetone-3-phosphate or AAP) to form pyridoxine 5'-phosphate (PNP) and inorganic phosphate. The chain is Pyridoxine 5'-phosphate synthase from Nostoc sp. (strain PCC 7120 / SAG 25.82 / UTEX 2576).